An 815-amino-acid chain; its full sequence is Translation initiation factor IF-2 (815 aa).

Basic and acidic residues predominate over residues 153-176 (VQEKEAEKKVEKLKTADKPKEGNK). Residues 153 to 219 (VQEKEAEKKV…THLSQKIQAE (67 aa)) form a disordered region. Basic residues predominate over residues 191-209 (KQLHVARHNPNRRLKKKDR). The 168-residue stretch at 315–482 (ARPPIVTIMG…AISLTAEILE (168 aa)) folds into the tr-type G domain. Positions 324-331 (GHVDHGKT) are G1. GTP is bound at residue 324-331 (GHVDHGKT). The tract at residues 349–353 (GITQH) is G2. The G3 stretch occupies residues 370–373 (DTPG). Residues 370–374 (DTPGH) and 424–427 (NKID) each bind GTP. The tract at residues 424–427 (NKID) is G4. A G5 region spans residues 460–462 (SAH).

The protein belongs to the TRAFAC class translation factor GTPase superfamily. Classic translation factor GTPase family. IF-2 subfamily.

The protein resides in the cytoplasm. Functionally, one of the essential components for the initiation of protein synthesis. Protects formylmethionyl-tRNA from spontaneous hydrolysis and promotes its binding to the 30S ribosomal subunits. Also involved in the hydrolysis of GTP during the formation of the 70S ribosomal complex. This chain is Translation initiation factor IF-2, found in Vesicomyosocius okutanii subsp. Calyptogena okutanii (strain HA).